The primary structure comprises 202 residues: NAD(P)H-quinone oxidoreductase chain 6 (202 aa).

A run of 5 helical transmembrane segments spans residues 9-29 (VVSFGILATMLIGTALGVVLA), 32-52 (IVYSAFLLGGVFISIAGMYLL), 61-81 (AQVLVYVGAVNVLILFAIMLV), 98-118 (VLTAIVSVGLFALLSTMVLAT), and 144-164 (FLLPFELASVLLLMAMVGAII).

The protein belongs to the complex I subunit 6 family.

It localises to the membrane. The enzyme catalyses a plastoquinone + NADH + (n+1) H(+)(in) = a plastoquinol + NAD(+) + n H(+)(out). It catalyses the reaction a plastoquinone + NADPH + (n+1) H(+)(in) = a plastoquinol + NADP(+) + n H(+)(out). Functionally, NDH-1 shuttles electrons from NAD(P)H, via FMN and iron-sulfur (Fe-S) centers, to quinones in the respiratory chain. The immediate electron acceptor for the enzyme in this species is believed to be plastoquinone. Couples the redox reaction to proton translocation (for every two electrons transferred, four hydrogen ions are translocated across the cytoplasmic membrane), and thus conserves the redox energy in a proton gradient. This Nostoc sp. (strain PCC 7120 / SAG 25.82 / UTEX 2576) protein is NAD(P)H-quinone oxidoreductase chain 6 (ndhG).